The chain runs to 121 residues: Large ribosomal subunit protein eL18 (121 aa).

It belongs to the eukaryotic ribosomal protein eL18 family.

The sequence is that of Large ribosomal subunit protein eL18 from Methanoregula boonei (strain DSM 21154 / JCM 14090 / 6A8).